A 71-amino-acid chain; its full sequence is Long neurotoxin 1 (71 aa).

5 disulfide bridges follow: Cys3/Cys21, Cys14/Cys42, Cys27/Cys31, Cys46/Cys57, and Cys58/Cys63.

This sequence belongs to the three-finger toxin family. Long-chain subfamily. Type II alpha-neurotoxin sub-subfamily. In terms of tissue distribution, expressed by the venom gland.

It localises to the secreted. In terms of biological role, binds with high affinity to muscular (alpha-1/CHRNA1) and neuronal (alpha-7/CHRNA7) nicotinic acetylcholine receptor (nAChR) and inhibits acetylcholine from binding to the receptor, thereby impairing neuromuscular and neuronal transmission. In Naja melanoleuca (Forest cobra), this protein is Long neurotoxin 1.